A 285-amino-acid chain; its full sequence is Sulfotransferase 2A1 (285 aa).

3'-phosphoadenylyl sulfate-binding residues include Lys-44, Ser-45, Gly-46, Thr-47, Asn-48, and Trp-49. His-99 functions as the Proton acceptor in the catalytic mechanism. Positions 121, 129, 184, 218, 223, 247, 248, and 249 each coordinate 3'-phosphoadenylyl sulfate.

Belongs to the sulfotransferase 1 family. As to quaternary structure, homodimer. Highly expressed in liver.

It localises to the cytoplasm. The enzyme catalyses an alcohol + 3'-phosphoadenylyl sulfate = an alkyl sulfate + adenosine 3',5'-bisphosphate + H(+). It carries out the reaction taurolithocholate + 3'-phosphoadenylyl sulfate = taurolithocholate 3-sulfate + adenosine 3',5'-bisphosphate + H(+). It catalyses the reaction pregnenolone + 3'-phosphoadenylyl sulfate = pregnenolone sulfate + adenosine 3',5'-bisphosphate + H(+). The catalysed reaction is 3beta-hydroxyandrost-5-en-17-one + 3'-phosphoadenylyl sulfate = dehydroepiandrosterone 3-sulfate + adenosine 3',5'-bisphosphate + H(+). The enzyme catalyses lithocholate + 3'-phosphoadenylyl sulfate = lithocholate sulfate + adenosine 3',5'-bisphosphate + H(+). It carries out the reaction (24S)-hydroxycholesterol + 3'-phosphoadenylyl sulfate = (24S)-hydroxycholesterol 24-sulfate + adenosine 3',5'-bisphosphate + H(+). It catalyses the reaction (24S)-hydroxycholesterol + 3'-phosphoadenylyl sulfate = (24S)-hydroxycholesterol 3-sulfate + adenosine 3',5'-bisphosphate + H(+). The catalysed reaction is (24S)-hydroxycholesterol 24-sulfate + 3'-phosphoadenylyl sulfate = (24S)-hydroxycholesterol 3,24-disulfate + adenosine 3',5'-bisphosphate + H(+). The enzyme catalyses androsterone + 3'-phosphoadenylyl sulfate = androsterone 3alpha-sulfate + adenosine 3',5'-bisphosphate + H(+). Functionally, sulfotransferase that utilizes 3'-phospho-5'-adenylyl sulfate (PAPS) as sulfonate donor to catalyze the sulfonation of steroids and bile acids in the liver and adrenal glands. Mediates the sulfation of a wide range of steroids and sterols, including pregnenolone, androsterone, DHEA, bile acids, cholesterol and as well many xenobiotics that contain alcohol and phenol functional groups. Sulfonation increases the water solubility of most compounds, and therefore their renal excretion, but it can also result in bioactivation to form active metabolites. Plays an important role in maintening steroid and lipid homeostasis. Plays a key role in bile acid metabolism. In addition, catalyzes the metabolic activation of potent carcinogenic polycyclic arylmethanols. The sequence is that of Sulfotransferase 2A1 (Sult2a1) from Mus musculus (Mouse).